The following is a 350-amino-acid chain: N-acetyllactosaminide beta-1,3-N-acetylglucosaminyltransferase 4 (350 aa).

Topologically, residues 1-4 (MLPR) are cytoplasmic. A helical; Signal-anchor for type II membrane protein membrane pass occupies residues 5–25 (LGCVLFCSLVVLLLSCLLLLK). At 26 to 350 (ERIPAGSSKA…RLKCAATHKP (325 aa)) the chain is on the lumenal side. N-linked (GlcNAc...) asparagine glycosylation is found at N53 and N166.

Belongs to the glycosyltransferase 31 family.

Its subcellular location is the golgi apparatus membrane. The enzyme catalyses a beta-D-galactosyl-(1-&gt;4)-N-acetyl-beta-D-glucosaminyl derivative + UDP-N-acetyl-alpha-D-glucosamine = an N-acetyl-beta-D-glucosaminyl-(1-&gt;3)-beta-D-galactosyl-(1-&gt;4)-N-acetyl-beta-D-glucosaminyl derivative + UDP + H(+). It participates in protein modification; protein glycosylation. Functionally, beta-1,3-N-acetylglucosaminyltransferase involved in the synthesis of poly-N-acetyllactosamine. Has activity for type 2 oligosaccharides. This Mus musculus (Mouse) protein is N-acetyllactosaminide beta-1,3-N-acetylglucosaminyltransferase 4 (B3gnt4).